A 106-amino-acid chain; its full sequence is MTAATQFDQVSIIKRANVYFDGKCVSHTVVFPDGSRKTLGVILPGALNFGTDAAELMEVQAGQCRIRLEGSEDWKTYGAGESFSVPGNSRFDIDVVETLDYVCSYL.

Belongs to the nucleoside phosphorylase PpnP family.

The enzyme catalyses a purine D-ribonucleoside + phosphate = a purine nucleobase + alpha-D-ribose 1-phosphate. It catalyses the reaction adenosine + phosphate = alpha-D-ribose 1-phosphate + adenine. The catalysed reaction is cytidine + phosphate = cytosine + alpha-D-ribose 1-phosphate. It carries out the reaction guanosine + phosphate = alpha-D-ribose 1-phosphate + guanine. The enzyme catalyses inosine + phosphate = alpha-D-ribose 1-phosphate + hypoxanthine. It catalyses the reaction thymidine + phosphate = 2-deoxy-alpha-D-ribose 1-phosphate + thymine. The catalysed reaction is uridine + phosphate = alpha-D-ribose 1-phosphate + uracil. It carries out the reaction xanthosine + phosphate = alpha-D-ribose 1-phosphate + xanthine. In terms of biological role, catalyzes the phosphorolysis of diverse nucleosides, yielding D-ribose 1-phosphate and the respective free bases. Can use uridine, adenosine, guanosine, cytidine, thymidine, inosine and xanthosine as substrates. Also catalyzes the reverse reactions. The polypeptide is Pyrimidine/purine nucleoside phosphorylase (Paraburkholderia xenovorans (strain LB400)).